Here is a 398-residue protein sequence, read N- to C-terminus: Serine/threonine-protein phosphatase 2A activator (398 aa).

ATP-binding residues include R137, T142, and G143. G197 and D203 together coordinate Mg(2+). ATP contacts are provided by P293, Q296, and H297. Over residues 343-352 (PVATAPPPPA) the composition is skewed to pro residues. The tract at residues 343–398 (PVATAPPPPAESLSIEQNVGDSSSESSDNSVVLRPSTSSSSLVAAAEGSGDKPSKE) is disordered. The span at 363 to 388 (DSSSESSDNSVVLRPSTSSSSLVAAA) shows a compositional bias: low complexity.

Belongs to the PTPA-type PPIase family. As to quaternary structure, associates with PP2A heterodimeric core enzyme PP2A(D), composed of a catalytic subunit (subunit C) and a constant regulatory subunit (PR65 or subunit A). Interacts with the catalytic subunit Pp4-19C of the serine/threonine-protein phosphatase 4 (PP4) complex; thereby mediating basal localization of the Miranda (Mira) complex; probably by facilitating the dephosphorylation of Mira.

The protein localises to the cytoplasm. It localises to the nucleus. The catalysed reaction is [protein]-peptidylproline (omega=180) = [protein]-peptidylproline (omega=0). Its function is as follows. PPIases accelerate the folding of proteins. It catalyzes the cis-trans isomerization of proline imidic peptide bonds in oligopeptides. Acts as a regulatory subunit for serine/threonine-protein phosphatase 2A (PP2A). Modulates PP2A activity or substrate specificity, probably by inducing a conformational change in the catalytic subunit, a proposed direct target of the PPIase. Acts as mediator for the basal localization of the Miranda (Mira) complex during mitosis of larval neuroblast asymmetric division. Associates with the phosphatase 4 (PP4) complex to mediate basal localization of Mira; probably by facilitating the dephosphorylation of Mira. Cortical association of Mira mediated by the PTPA-PP4 complex seems to be independent of aPKC activity. The protein is Serine/threonine-protein phosphatase 2A activator of Drosophila melanogaster (Fruit fly).